The following is a 226-amino-acid chain: MSVVSNTSFEHALREGANALGLDLSEAQITQLLDFLALLQKWNKVYNLTAVRDPQEMLTHHLLDSLAAVPPLRRHVAQRGQDSAARPGARLLDVGSGGGLPGVVFAICCPEVDVSCVDTVAKKAAFIQQAAGTLGLSNLHGIHARVETLAGPFDVVSCRAFAALADFTAWSRQALAPHGVWLAMKGKHPHDEIAALPADVSVFHVEQLTVPGLQAERCILWLRPVA.

S-adenosyl-L-methionine is bound by residues G95, L100, 146–147, and R159; that span reads VE.

This sequence belongs to the methyltransferase superfamily. RNA methyltransferase RsmG family.

It localises to the cytoplasm. It catalyses the reaction guanosine(527) in 16S rRNA + S-adenosyl-L-methionine = N(7)-methylguanosine(527) in 16S rRNA + S-adenosyl-L-homocysteine. Specifically methylates the N7 position of guanine in position 527 of 16S rRNA. The polypeptide is Ribosomal RNA small subunit methyltransferase G (Acidovorax sp. (strain JS42)).